A 324-amino-acid polypeptide reads, in one-letter code: NADH-ubiquinone oxidoreductase chain 1 (324 aa).

8 consecutive transmembrane segments (helical) span residues 9-29 (LINP…LTLL), 76-96 (LFLV…APMP), 106-126 (LGVL…LGSG), 146-166 (ISYE…WGGY), 177-197 (ALWL…STLA), 228-248 (LLFL…AILF), 259-279 (ELTT…FLWV), and 299-319 (FLPL…AFAG).

It belongs to the complex I subunit 1 family.

Its subcellular location is the mitochondrion inner membrane. The catalysed reaction is a ubiquinone + NADH + 5 H(+)(in) = a ubiquinol + NAD(+) + 4 H(+)(out). Functionally, core subunit of the mitochondrial membrane respiratory chain NADH dehydrogenase (Complex I) that is believed to belong to the minimal assembly required for catalysis. Complex I functions in the transfer of electrons from NADH to the respiratory chain. The immediate electron acceptor for the enzyme is believed to be ubiquinone. The protein is NADH-ubiquinone oxidoreductase chain 1 (MT-ND1) of Formosania lacustris (Oriental stream loach).